The following is a 476-amino-acid chain: Glutamate--tRNA ligase (476 aa).

The 'HIGH' region motif lies at 9-19; the sequence is PSPTGTLHIGT. Positions 248–252 match the 'KMSKS' region motif; it reads KLSKR. ATP is bound at residue K251.

Belongs to the class-I aminoacyl-tRNA synthetase family. Glutamate--tRNA ligase type 1 subfamily. Monomer.

The protein resides in the cytoplasm. The catalysed reaction is tRNA(Glu) + L-glutamate + ATP = L-glutamyl-tRNA(Glu) + AMP + diphosphate. In terms of biological role, catalyzes the attachment of glutamate to tRNA(Glu) in a two-step reaction: glutamate is first activated by ATP to form Glu-AMP and then transferred to the acceptor end of tRNA(Glu). This Prochlorococcus marinus (strain MIT 9313) protein is Glutamate--tRNA ligase.